The sequence spans 500 residues: Cytochrome P450 11B2, mitochondrial (500 aa).

The N-terminal 24 residues, 1-24, are a transit peptide targeting the mitochondrion; sequence MALRAKADVWLARPWQCLPRTRAL. F381 lines the 21-hydroxyprogesterone pocket. C447 lines the heme pocket.

It belongs to the cytochrome P450 family. It depends on heme as a cofactor. As to expression, adrenal gland.

The protein resides in the mitochondrion inner membrane. The enzyme catalyses a steroid + 2 reduced [adrenodoxin] + O2 + 2 H(+) = an 11beta-hydroxysteroid + 2 oxidized [adrenodoxin] + H2O. It catalyses the reaction 21-hydroxyprogesterone + 2 reduced [adrenodoxin] + O2 + 2 H(+) = corticosterone + 2 oxidized [adrenodoxin] + H2O. It carries out the reaction corticosterone + 2 reduced [adrenodoxin] + O2 + 2 H(+) = 18-hydroxycorticosterone + 2 oxidized [adrenodoxin] + H2O. The catalysed reaction is 18-hydroxycorticosterone + 2 reduced [adrenodoxin] + O2 + 2 H(+) = aldosterone + 2 oxidized [adrenodoxin] + 2 H2O. The enzyme catalyses 11-deoxycortisol + 2 reduced [adrenodoxin] + O2 + 2 H(+) = cortisol + 2 oxidized [adrenodoxin] + H2O. It catalyses the reaction 21-hydroxyprogesterone + 2 reduced [adrenodoxin] + O2 + 2 H(+) = 18-hydroxy-11-deoxycorticosterone + 2 oxidized [adrenodoxin] + H2O. It carries out the reaction cortisol + 2 reduced [adrenodoxin] + O2 + 2 H(+) = 18-hydroxycortisol + 2 oxidized [adrenodoxin] + H2O. The catalysed reaction is 18-hydroxycortisol + 2 reduced [adrenodoxin] + O2 + 2 H(+) = 18-oxocortisol + 2 oxidized [adrenodoxin] + 2 H2O. Its pathway is steroid biosynthesis. Functionally, a cytochrome P450 monooxygenase that catalyzes the biosynthesis of aldosterone, the main mineralocorticoid in the human body responsible for salt and water homeostasis, thus involved in blood pressure regulation, arterial hypertension, and the development of heart failure. Catalyzes three sequential oxidative reactions of 11-deoxycorticosterone (21-hydroxyprogesterone), namely 11-beta hydroxylation, followed by two successive oxidations at C18 yielding 18-hydroxy and then 18-oxo intermediates (that would not leave the enzyme active site during the consecutive hydroxylation reactions), ending with the formation of aldosterone. Can also produce 18-hydroxycortisol and 18-oxocortisol, derived from successive oxidations of cortisol at C18, normally found at very low levels, but significantly increased in primary aldosteronism, the most common form of secondary hypertension. Mechanistically, uses molecular oxygen inserting one oxygen atom into a substrate and reducing the second into a water molecule. Two electrons are provided by NADPH via a two-protein mitochondrial transfer system comprising flavoprotein FDXR (adrenodoxin/ferredoxin reductase) and nonheme iron-sulfur protein FDX1 or FDX2 (adrenodoxin/ferredoxin). Could also be involved in the androgen metabolic pathway. The sequence is that of Cytochrome P450 11B2, mitochondrial (CYP11B2) from Mesocricetus auratus (Golden hamster).